Reading from the N-terminus, the 426-residue chain is Enolase (426 aa).

Gln-163 contributes to the (2R)-2-phosphoglycerate binding site. Catalysis depends on Glu-205, which acts as the Proton donor. The Mg(2+) site is built by Asp-242, Glu-285, and Asp-312. Lys-337, Arg-366, Ser-367, and Lys-388 together coordinate (2R)-2-phosphoglycerate. Lys-337 serves as the catalytic Proton acceptor.

It belongs to the enolase family. Mg(2+) serves as cofactor.

It localises to the cytoplasm. Its subcellular location is the secreted. The protein localises to the cell surface. It carries out the reaction (2R)-2-phosphoglycerate = phosphoenolpyruvate + H2O. It functions in the pathway carbohydrate degradation; glycolysis; pyruvate from D-glyceraldehyde 3-phosphate: step 4/5. Its function is as follows. Catalyzes the reversible conversion of 2-phosphoglycerate (2-PG) into phosphoenolpyruvate (PEP). It is essential for the degradation of carbohydrates via glycolysis. The sequence is that of Enolase from Phenylobacterium zucineum (strain HLK1).